Reading from the N-terminus, the 190-residue chain is Protein GrpE (190 aa).

Residues 1–18 are compositionally biased toward polar residues; that stretch reads MTETPNTSSEEIQTSEPS. Residues 1-21 form a disordered region; that stretch reads MTETPNTSSEEIQTSEPSPDN.

The protein belongs to the GrpE family. Homodimer.

The protein resides in the cytoplasm. In terms of biological role, participates actively in the response to hyperosmotic and heat shock by preventing the aggregation of stress-denatured proteins, in association with DnaK and GrpE. It is the nucleotide exchange factor for DnaK and may function as a thermosensor. Unfolded proteins bind initially to DnaJ; upon interaction with the DnaJ-bound protein, DnaK hydrolyzes its bound ATP, resulting in the formation of a stable complex. GrpE releases ADP from DnaK; ATP binding to DnaK triggers the release of the substrate protein, thus completing the reaction cycle. Several rounds of ATP-dependent interactions between DnaJ, DnaK and GrpE are required for fully efficient folding. This Chlamydia trachomatis serovar L2b (strain UCH-1/proctitis) protein is Protein GrpE.